Consider the following 542-residue polypeptide: Coiled-coil domain-containing protein 60 (542 aa).

Residues 70–97 (TMLQEETAFKKHQQHLKKLQEEELNKFQ) are a coiled coil. 2 disordered regions span residues 228-284 (ATRK…EEEV) and 334-358 (QTTHKSSERSSTTSGESHIQVTQKK). 2 stretches are compositionally biased toward low complexity: residues 245 to 261 (SGGSSPQSSMMSVNPSS) and 342 to 351 (RSSTTSGESH).

This Rattus norvegicus (Rat) protein is Coiled-coil domain-containing protein 60 (Ccdc60).